Reading from the N-terminus, the 209-residue chain is Transcription elongation factor A protein-like 4 (209 aa).

At Met1 the chain carries N-acetylmethionine. The segment at 1 to 125 (MEKLYNENEG…VPRKAKRKTN (125 aa)) is disordered. Residues 25-96 (QDERKPEVAC…GSEREGKPES (72 aa)) show a composition bias toward basic and acidic residues. 2 positions are modified to phosphoserine: Ser88 and Ser96.

The protein belongs to the TFS-II family. TFA subfamily.

It localises to the nucleus. Functionally, may be involved in transcriptional regulation. This chain is Transcription elongation factor A protein-like 4 (TCEAL4), found in Pongo abelii (Sumatran orangutan).